Here is a 473-residue protein sequence, read N- to C-terminus: Photosystem II CP43 reaction center protein (473 aa).

The propeptide occupies 1–14 (MKTLYSLRRFYPVE). Residue threonine 15 is modified to N-acetylthreonine. Threonine 15 is subject to Phosphothreonine. 5 consecutive transmembrane segments (helical) span residues 69–93 (LFEV…PHLA), 134–155 (LIGP…KDKN), 178–200 (KALY…RKIT), 255–275 (KPFA…LSYS), and 291–312 (WFNN…ASQA). Glutamate 367 provides a ligand contact to [CaMn4O5] cluster. The chain crosses the membrane as a helical span at residues 447–471 (RARAAAAGFEKGIDRDTEPVLSMTP).

Belongs to the PsbB/PsbC family. PsbC subfamily. PSII is composed of 1 copy each of membrane proteins PsbA, PsbB, PsbC, PsbD, PsbE, PsbF, PsbH, PsbI, PsbJ, PsbK, PsbL, PsbM, PsbT, PsbX, PsbY, PsbZ, Psb30/Ycf12, at least 3 peripheral proteins of the oxygen-evolving complex and a large number of cofactors. It forms dimeric complexes. Binds multiple chlorophylls and provides some of the ligands for the Ca-4Mn-5O cluster of the oxygen-evolving complex. It may also provide a ligand for a Cl- that is required for oxygen evolution. PSII binds additional chlorophylls, carotenoids and specific lipids. is required as a cofactor.

The protein localises to the plastid. It is found in the chloroplast thylakoid membrane. In terms of biological role, one of the components of the core complex of photosystem II (PSII). It binds chlorophyll and helps catalyze the primary light-induced photochemical processes of PSII. PSII is a light-driven water:plastoquinone oxidoreductase, using light energy to abstract electrons from H(2)O, generating O(2) and a proton gradient subsequently used for ATP formation. This Angiopteris evecta (Mule's foot fern) protein is Photosystem II CP43 reaction center protein.